The primary structure comprises 371 residues: Glutamate 5-kinase 2 (371 aa).

Residue K13 participates in ATP binding. Positions 53, 140, and 152 each coordinate substrate. ATP-binding positions include 172–173 (SD) and 214–220 (TGGMRSK). The PUA domain occupies 280-356 (EGEMILSDDC…KELTNRALID (77 aa)).

This sequence belongs to the glutamate 5-kinase family.

The protein localises to the cytoplasm. It catalyses the reaction L-glutamate + ATP = L-glutamyl 5-phosphate + ADP. Its pathway is amino-acid biosynthesis; L-proline biosynthesis; L-glutamate 5-semialdehyde from L-glutamate: step 1/2. Its function is as follows. Catalyzes the transfer of a phosphate group to glutamate to form L-glutamate 5-phosphate. This Bacillus subtilis (strain 168) protein is Glutamate 5-kinase 2 (proJ).